We begin with the raw amino-acid sequence, 195 residues long: MAAAAGRSIVFVTGNAKKLEEVVQILGDKFPCKLVAKKIDLPEYQGEPDEISIQKCREAAKQIQGPVIVEDTCLCFNALGGLPGPYIKWFLEKIKPEGLHRMLEGFEDKSAIALCTFAYCNGNPDDTVLLFRGKTLGQIVLPRGPRDFGWDPCFQPDGFQQTYAELPKEVKNTISHRYRALKEMSDYFIQNGTKV.

13–18 (TGNAKK) contacts ITP. Glu43 serves as a coordination point for Mg(2+). Residues Lys55, 71–72 (DT), Lys88, 148–151 (FGWD), Lys171, and 176–177 (HR) contribute to the ITP site.

It belongs to the HAM1 NTPase family. In terms of assembly, homodimer. Requires Mg(2+) as cofactor. Mn(2+) serves as cofactor.

The protein localises to the cytoplasm. It carries out the reaction ITP + H2O = IMP + diphosphate + H(+). The enzyme catalyses dITP + H2O = dIMP + diphosphate + H(+). The catalysed reaction is XTP + H2O = XMP + diphosphate + H(+). It catalyses the reaction N(6)-hydroxy-dATP + H2O = N(6)-hydroxy-dAMP + diphosphate + H(+). Pyrophosphatase that hydrolyzes the non-canonical purine nucleotides inosine triphosphate (ITP), deoxyinosine triphosphate (dITP) as well as 2'-deoxy-N-6-hydroxylaminopurine triphosphate (dHAPTP) and xanthosine 5'-triphosphate (XTP) to their respective monophosphate derivatives. The enzyme does not distinguish between the deoxy- and ribose forms. Probably excludes non-canonical purines from RNA and DNA precursor pools, thus preventing their incorporation into RNA and DNA and avoiding chromosomal lesions. The protein is Inosine triphosphate pyrophosphatase (itpa) of Xenopus laevis (African clawed frog).